Reading from the N-terminus, the 533-residue chain is MKRFFSKLFSKSPTSGRVPSPDSDYSEEEQRLLAEENGYFQDSNEYVEPNIPAVYGSMIPVAQQLQQHHVHTPGESFADNASGYPVIKHELSELLRLGSPTVIAYLLQSSEQFSTVFTLGHLGKEYLAASSLSTMTAAISAFSIFQGVISSLDTLATQAFGANKPYNVAIYLQRCLLILAVLHIPVALIWLNLEHILIFLHQDPMVAHLCGRYMRVFILAAPGYAVFEALKRYLQAQGIFTPITYVLCFAAPLNILLNYLLVWHPTIGFGFLGAPVAVATTFWFQSICLILYICFSSTPIPWPGFSRQALKNLSPMLHFSFHGMLMIVTEWAAYEMTSLGAGYLGTAPLASQSILLTSTSLLFQIPFAFAVASSTRVGHLIGSGRANLARLCSRVAYSLALCISIFDGSLIFCFRDVWGSLFTSDPEVLAVVKDIFPILSLFIVTDGLNAVGGGLLRGTGKQYIGGLISIGSSYLFALPVTVFVVVYFNTGLKGIWCGMILSSVTAITCQFTVLFNTDWHRVLQEARHRLTHV.

The segment at 1-26 (MKRFFSKLFSKSPTSGRVPSPDSDYS) is disordered. Serine 20 and serine 23 each carry phosphoserine. A Phosphotyrosine modification is found at tyrosine 25. Residue serine 26 is modified to Phosphoserine. 10 helical membrane-spanning segments follow: residues 178–198 (ILAV…HILI), 213–230 (YMRV…FEAL), 242–264 (PITY…LVWH), 274–296 (APVA…ICFS), 313–333 (LSPM…EWAA), 353–373 (SILL…AVAS), 394–414 (RVAY…IFCF), 435–455 (IFPI…GGGL), 466–486 (GLIS…FVVV), and 495–515 (IWCG…TVLF).

It belongs to the multi antimicrobial extrusion (MATE) (TC 2.A.66.1) family.

It localises to the vacuole membrane. This is an uncharacterized protein from Schizosaccharomyces pombe (strain 972 / ATCC 24843) (Fission yeast).